A 244-amino-acid polypeptide reads, in one-letter code: Phosphoadenosine 5'-phosphosulfate reductase (244 aa).

Cys-239 functions as the Nucleophile; cysteine thiosulfonate intermediate in the catalytic mechanism.

The protein belongs to the PAPS reductase family. CysH subfamily.

It localises to the cytoplasm. It catalyses the reaction [thioredoxin]-disulfide + sulfite + adenosine 3',5'-bisphosphate + 2 H(+) = [thioredoxin]-dithiol + 3'-phosphoadenylyl sulfate. Its pathway is sulfur metabolism; hydrogen sulfide biosynthesis; sulfite from sulfate: step 3/3. In terms of biological role, catalyzes the formation of sulfite from phosphoadenosine 5'-phosphosulfate (PAPS) using thioredoxin as an electron donor. The protein is Phosphoadenosine 5'-phosphosulfate reductase of Zymomonas mobilis subsp. mobilis (strain ATCC 31821 / ZM4 / CP4).